A 129-amino-acid polypeptide reads, in one-letter code: ATP synthase epsilon chain (129 aa).

This sequence belongs to the ATPase epsilon chain family. F-type ATPases have 2 components, CF(1) - the catalytic core - and CF(0) - the membrane proton channel. CF(1) has five subunits: alpha(3), beta(3), gamma(1), delta(1), epsilon(1). CF(0) has three main subunits: a, b and c.

Its subcellular location is the cell inner membrane. Produces ATP from ADP in the presence of a proton gradient across the membrane. This chain is ATP synthase epsilon chain, found in Campylobacter curvus (strain 525.92).